The following is a 190-amino-acid chain: Putative resolvase R771 (190 aa).

The segment at residues 11-30 (SSVLGVHQRTLYQWDKKGWI) is a DNA-binding region (H-T-H motif). The Resolvase/invertase-type recombinase catalytic domain occupies 61–190 (LSICYVRVSS…RNGLKKYSNK (130 aa)). Residues 66-92 (VRVSSNNQKDDLERQIKFMKKKYPNHT) adopt a coiled-coil conformation. Serine 69 functions as the O-(5'-phospho-DNA)-serine intermediate in the catalytic mechanism.

It belongs to the site-specific recombinase resolvase family.

In terms of biological role, resolvase catalyzes the resolution (a site-specific recombination) of the cointegrated replicon to yield the final transposition products. This chain is Putative resolvase R771, found in Acanthamoeba polyphaga (Amoeba).